Consider the following 131-residue polypeptide: D-ribose pyranase (131 aa).

Residue His20 is the Proton donor of the active site. Residues Asp28, His98, and 120–122 (YAN) each bind substrate.

Belongs to the RbsD / FucU family. RbsD subfamily. Homodecamer.

It is found in the cytoplasm. The catalysed reaction is beta-D-ribopyranose = beta-D-ribofuranose. It participates in carbohydrate metabolism; D-ribose degradation; D-ribose 5-phosphate from beta-D-ribopyranose: step 1/2. Functionally, catalyzes the interconversion of beta-pyran and beta-furan forms of D-ribose. The polypeptide is D-ribose pyranase (Bacillus cereus (strain ATCC 10987 / NRS 248)).